A 379-amino-acid polypeptide reads, in one-letter code: Cyclic di-GMP phosphodiesterase PdeB (379 aa).

The HD-GYP domain occupies 114–310 (FYKKQKKIFI…PLDFIVELND (197 aa)).

It depends on Mn(2+) as a cofactor.

The catalysed reaction is 3',3'-c-di-GMP + 2 H2O = 2 GMP + 2 H(+). Functionally, phosphodiesterase (PDE) that catalyzes the hydrolysis of cyclic diguanylate (c-di-GMP) to GMP. The polypeptide is Cyclic di-GMP phosphodiesterase PdeB (Borreliella burgdorferi (strain ATCC 35210 / DSM 4680 / CIP 102532 / B31) (Borrelia burgdorferi)).